Reading from the N-terminus, the 158-residue chain is SsrA-binding protein (158 aa).

It belongs to the SmpB family.

Its subcellular location is the cytoplasm. In terms of biological role, required for rescue of stalled ribosomes mediated by trans-translation. Binds to transfer-messenger RNA (tmRNA), required for stable association of tmRNA with ribosomes. tmRNA and SmpB together mimic tRNA shape, replacing the anticodon stem-loop with SmpB. tmRNA is encoded by the ssrA gene; the 2 termini fold to resemble tRNA(Ala) and it encodes a 'tag peptide', a short internal open reading frame. During trans-translation Ala-aminoacylated tmRNA acts like a tRNA, entering the A-site of stalled ribosomes, displacing the stalled mRNA. The ribosome then switches to translate the ORF on the tmRNA; the nascent peptide is terminated with the 'tag peptide' encoded by the tmRNA and targeted for degradation. The ribosome is freed to recommence translation, which seems to be the essential function of trans-translation. The protein is SsrA-binding protein of Bartonella henselae (strain ATCC 49882 / DSM 28221 / CCUG 30454 / Houston 1) (Rochalimaea henselae).